The sequence spans 207 residues: Ribosomal RNA small subunit methyltransferase G (207 aa).

S-adenosyl-L-methionine-binding positions include Gly76, Gln81, 127-128 (VE), and Arg141.

This sequence belongs to the methyltransferase superfamily. RNA methyltransferase RsmG family.

It localises to the cytoplasm. The enzyme catalyses guanosine(527) in 16S rRNA + S-adenosyl-L-methionine = N(7)-methylguanosine(527) in 16S rRNA + S-adenosyl-L-homocysteine. Specifically methylates the N7 position of guanine in position 527 of 16S rRNA. The polypeptide is Ribosomal RNA small subunit methyltransferase G (Neisseria meningitidis serogroup C (strain 053442)).